We begin with the raw amino-acid sequence, 214 residues long: Fruiting body protein SC14 (214 aa).

Residues 1-18 (MKLNIAILLAALAATASA) form the signal peptide. Asn61 and Asn144 each carry an N-linked (GlcNAc...) asparagine glycan. An SCP domain is found at 72-195 (LTAHNDERAQ…KSLWYYVCNY (124 aa)).

This sequence belongs to the CRISP family.

It localises to the secreted. This is Fruiting body protein SC14 (SC14) from Schizophyllum commune (Split gill fungus).